Here is a 328-residue protein sequence, read N- to C-terminus: 4-hydroxythreonine-4-phosphate dehydrogenase (328 aa).

Substrate-binding residues include His134 and Thr135. Residues His164, His209, and His265 each contribute to the a divalent metal cation site. Substrate-binding residues include Lys273, Asn282, and Arg291.

It belongs to the PdxA family. In terms of assembly, homodimer. Requires Zn(2+) as cofactor. Mg(2+) is required as a cofactor. It depends on Co(2+) as a cofactor.

It is found in the cytoplasm. The enzyme catalyses 4-(phosphooxy)-L-threonine + NAD(+) = 3-amino-2-oxopropyl phosphate + CO2 + NADH. The protein operates within cofactor biosynthesis; pyridoxine 5'-phosphate biosynthesis; pyridoxine 5'-phosphate from D-erythrose 4-phosphate: step 4/5. In terms of biological role, catalyzes the NAD(P)-dependent oxidation of 4-(phosphooxy)-L-threonine (HTP) into 2-amino-3-oxo-4-(phosphooxy)butyric acid which spontaneously decarboxylates to form 3-amino-2-oxopropyl phosphate (AHAP). In Vibrio vulnificus (strain YJ016), this protein is 4-hydroxythreonine-4-phosphate dehydrogenase.